The following is a 259-amino-acid chain: NAD kinase (259 aa).

Residue Asp43 is the Proton acceptor of the active site. Residues 43 to 44 (DG), 111 to 112 (NE), and Arg136 each bind NAD(+).

Belongs to the NAD kinase family. Requires a divalent metal cation as cofactor.

The protein resides in the cytoplasm. The catalysed reaction is NAD(+) + ATP = ADP + NADP(+) + H(+). Its function is as follows. Involved in the regulation of the intracellular balance of NAD and NADP, and is a key enzyme in the biosynthesis of NADP. Catalyzes specifically the phosphorylation on 2'-hydroxyl of the adenosine moiety of NAD to yield NADP. The chain is NAD kinase from Mycoplasma genitalium (strain ATCC 33530 / DSM 19775 / NCTC 10195 / G37) (Mycoplasmoides genitalium).